The following is a 404-amino-acid chain: Aspergillopepsin-1 (404 aa).

An N-terminal signal peptide occupies residues 1–20 (MVILSKVAAVAVGLSTVASA). A propeptide spans 21–77 (LPTGPSHSPHARRGFTINQITRQTARVGPKTASFPAIYSRALAKYGGTVPAHLKSAV) (activation peptide). One can recognise a Peptidase A1 domain in the interval 95-401 (YLTPVNIGGT…DSQGPRLGFA (307 aa)). Residue aspartate 111 is part of the active site. An N-linked (GlcNAc...) asparagine glycan is attached at asparagine 140. Residue aspartate 293 is part of the active site. A disulfide bond links cysteine 329 and cysteine 364.

This sequence belongs to the peptidase A1 family. In terms of assembly, monomer.

The protein resides in the secreted. It carries out the reaction Hydrolysis of proteins with broad specificity. Generally favors hydrophobic residues in P1 and P1', but also accepts Lys in P1, which leads to activation of trypsinogen. Does not clot milk.. Secreted aspartic endopeptidase that allows assimilation of proteinaceous substrates. The scissile peptide bond is attacked by a nucleophilic water molecule activated by two aspartic residues in the active site. Shows a broad primary substrate specificity. Favors hydrophobic residues at the P1 and P1' positions, but also accepts a lysine residue in the P1 position, leading to the activation of trypsinogen and chymotrypsinogen A. This chain is Aspergillopepsin-1 (pepA), found in Aspergillus flavus (strain ATCC 200026 / FGSC A1120 / IAM 13836 / NRRL 3357 / JCM 12722 / SRRC 167).